A 139-amino-acid chain; its full sequence is D-ribose pyranase (139 aa).

Catalysis depends on His20, which acts as the Proton donor. Substrate-binding positions include Asp28, His106, and 128-130; that span reads YAN.

The protein belongs to the RbsD / FucU family. RbsD subfamily. Homodecamer.

The protein resides in the cytoplasm. It carries out the reaction beta-D-ribopyranose = beta-D-ribofuranose. Its pathway is carbohydrate metabolism; D-ribose degradation; D-ribose 5-phosphate from beta-D-ribopyranose: step 1/2. Catalyzes the interconversion of beta-pyran and beta-furan forms of D-ribose. The polypeptide is D-ribose pyranase (Salmonella arizonae (strain ATCC BAA-731 / CDC346-86 / RSK2980)).